The primary structure comprises 577 residues: Arginine--tRNA ligase (577 aa).

A 'HIGH' region motif is present at residues 122–132 (PNVAKEMHVGH).

Belongs to the class-I aminoacyl-tRNA synthetase family. In terms of assembly, monomer.

It localises to the cytoplasm. It catalyses the reaction tRNA(Arg) + L-arginine + ATP = L-arginyl-tRNA(Arg) + AMP + diphosphate. The polypeptide is Arginine--tRNA ligase (Haemophilus influenzae (strain PittEE)).